We begin with the raw amino-acid sequence, 183 residues long: UPF0200 protein MMP1282 (183 aa).

8–15 contributes to the ATP binding site; the sequence is GMPGSGKS.

It belongs to the UPF0200 family.

The protein is UPF0200 protein MMP1282 of Methanococcus maripaludis (strain DSM 14266 / JCM 13030 / NBRC 101832 / S2 / LL).